A 772-amino-acid polypeptide reads, in one-letter code: A type blood N-acetyl-alpha-D-galactosamine deacetylase (772 aa).

An N-terminal signal peptide occupies residues 1–27 (MRNRRKAVSLLTGLLVTAQLFPTAALA). Residues Ser-87 and His-123 each coordinate substrate. Asp-126 is an a divalent metal cation binding site. The tract at residues 180 to 402 (WSKPTSDAER…WRIGYAENSF (223 aa)) is deacetylase activity. Residue Tyr-236 participates in substrate binding. Residue His-278 participates in a divalent metal cation binding. Residues 494 to 605 (SDDLEIAVVE…KDLVASGSDW (112 aa)) enclose the F5/8 type C domain. The tract at residues 502–765 (VENPYTLIPQ…VCVSPVVDFD (264 aa)) is CBM32 carbohydrate-binding domain. The interval 515–772 (TATATSVYGG…DFDYFSYVGE (258 aa)) is not required for activity on soluble substrates.

A divalent metal cation is required as a cofactor.

The enzyme catalyses an N-acetyl-alpha-D-galactosaminyl-(1-&gt;3)-[alpha-L-fucosyl-(1-&gt;2)]-beta-D-galactosyl derivative + H2O = an alpha-D-galactosaminyl-(1-&gt;3)-[alpha-L-fucosyl-(1-&gt;2)]-beta-D-galactosyl derivative + acetate. With respect to regulation, inhibited by EDTA. Functionally, one of an enzyme pair that work together to convert the A antigen to the H antigen of the O blood type, which together release galactosamine. Catalyzes the first step in the conversion, generating the substrate for the subsequent enzyme (FpGalNase, AC P0DTR5). Works on many different A antigen subtypes. Glu-90 probably activates a nucleophilic water molecule to start the deacetylation reaction. The chain is A type blood N-acetyl-alpha-D-galactosamine deacetylase from Flavonifractor plautii (Fusobacterium plautii).